Reading from the N-terminus, the 2890-residue chain is Bifunctional DNA-directed RNA polymerase subunit beta-beta' (2890 aa).

The DNA-directed RNA polymerase subunit beta stretch occupies residues 1–1377; it reads MSKKIPLKNR…DINIFGDDVD (1377 aa). The interval 1384 to 2890 is DNA-directed RNA polymerase subunit beta'; sequence PIMIKEDDRP…LRALEDNSKF (1507 aa). The Zn(2+) site is built by Cys-1449, Cys-1451, Cys-1465, and Cys-1468. Residues Asp-1849, Asp-1851, and Asp-1853 each contribute to the Mg(2+) site. The Zn(2+) site is built by Cys-2179, Cys-2253, Cys-2260, and Cys-2263.

The protein in the N-terminal section; belongs to the RNA polymerase beta chain family. In the C-terminal section; belongs to the RNA polymerase beta' chain family. In terms of assembly, the RNAP catalytic core consists of 2 alpha, 1 beta/beta' and 1 omega subunit. When a sigma factor is associated with the core the holoenzyme is formed, which can initiate transcription. Mg(2+) serves as cofactor. Requires Zn(2+) as cofactor.

It carries out the reaction RNA(n) + a ribonucleoside 5'-triphosphate = RNA(n+1) + diphosphate. Its function is as follows. DNA-dependent RNA polymerase catalyzes the transcription of DNA into RNA using the four ribonucleoside triphosphates as substrates. This chain is Bifunctional DNA-directed RNA polymerase subunit beta-beta' (rpoBC), found in Helicobacter pylori (strain J99 / ATCC 700824) (Campylobacter pylori J99).